Here is a 177-residue protein sequence, read N- to C-terminus: Alkyl hydroperoxide reductase AhpD (177 aa).

Catalysis depends on C130, which acts as the Proton donor. Cysteines 130 and 133 form a disulfide. C133 functions as the Cysteine sulfenic acid (-SOH) intermediate in the catalytic mechanism.

It belongs to the AhpD family. Homotrimer.

It carries out the reaction N(6)-[(R)-dihydrolipoyl]-L-lysyl-[lipoyl-carrier protein] + a hydroperoxide = N(6)-[(R)-lipoyl]-L-lysyl-[lipoyl-carrier protein] + an alcohol + H2O. In terms of biological role, antioxidant protein with alkyl hydroperoxidase activity. Required for the reduction of the AhpC active site cysteine residues and for the regeneration of the AhpC enzyme activity. The protein is Alkyl hydroperoxide reductase AhpD of Corynebacterium aurimucosum (strain ATCC 700975 / DSM 44827 / CIP 107346 / CN-1) (Corynebacterium nigricans).